The sequence spans 225 residues: NAD(P)H-quinone oxidoreductase subunit K, chloroplastic (225 aa).

Positions 43, 44, 108, and 139 each coordinate [4Fe-4S] cluster.

This sequence belongs to the complex I 20 kDa subunit family. As to quaternary structure, NDH is composed of at least 16 different subunits, 5 of which are encoded in the nucleus. The cofactor is [4Fe-4S] cluster.

It localises to the plastid. Its subcellular location is the chloroplast thylakoid membrane. It catalyses the reaction a plastoquinone + NADH + (n+1) H(+)(in) = a plastoquinol + NAD(+) + n H(+)(out). The catalysed reaction is a plastoquinone + NADPH + (n+1) H(+)(in) = a plastoquinol + NADP(+) + n H(+)(out). NDH shuttles electrons from NAD(P)H:plastoquinone, via FMN and iron-sulfur (Fe-S) centers, to quinones in the photosynthetic chain and possibly in a chloroplast respiratory chain. The immediate electron acceptor for the enzyme in this species is believed to be plastoquinone. Couples the redox reaction to proton translocation, and thus conserves the redox energy in a proton gradient. The chain is NAD(P)H-quinone oxidoreductase subunit K, chloroplastic from Populus alba (White poplar).